We begin with the raw amino-acid sequence, 523 residues long: UDP-glucuronosyltransferase 3A1 (523 aa).

Positions 1 to 22 (MAGQQALLLFGFILPGLLFSEA) are cleaved as a signal peptide. The Extracellular portion of the chain corresponds to 23-483 (AKILTVSLVG…HAFQQPWYEQ (461 aa)). An N-linked (GlcNAc...) asparagine glycan is attached at Asn52. A helical transmembrane segment spans residues 484-504 (YLLDVFLFLLVVTLGTMWLCG). Residues 505–523 (KLLGLVARWLCGARKLKKA) are Cytoplasmic-facing.

Belongs to the UDP-glycosyltransferase family.

It is found in the membrane. The catalysed reaction is glucuronate acceptor + UDP-alpha-D-glucuronate = acceptor beta-D-glucuronoside + UDP + H(+). In terms of biological role, UDP-glucuronosyltransferases catalyze phase II biotransformation reactions in which lipophilic substrates are conjugated with glucuronic acid to increase water solubility and enhance excretion. They are of major importance in the conjugation and subsequent elimination of potentially toxic xenobiotics and endogenous compounds. This is UDP-glucuronosyltransferase 3A1 (UGT3A1) from Bos taurus (Bovine).